Reading from the N-terminus, the 67-residue chain is Large ribosomal subunit protein bL35 (67 aa).

The protein belongs to the bacterial ribosomal protein bL35 family.

This Deinococcus geothermalis (strain DSM 11300 / CIP 105573 / AG-3a) protein is Large ribosomal subunit protein bL35.